Reading from the N-terminus, the 931-residue chain is MTSQLITRLLPINSTTSPSIYETIRQYDDDSGHSDTEERAAMAVDEENLDGAYQDYELEGALAQASDTQSTHSSFQSPAAGDSHLPRHPKWTQESVNEAEHDDEVPASLLVEGDGEEDPLPPPPRPPSNRNRILDDAPAAEFCSPRLRGQWEAAEEHQTPHLAPQPSPPLNLHSNRRAGLAFANPKEKAMWRWANVENLDNFLKDVYIYFIGNGIWCIVLSRMLNILTLAFVVGFTTFLTNCVDYRKVPHSKTLNQIIVPKCTNKMSASSTFFLWLFTVFWFGKVFQYIIDFRRLRHMHDFYLYLLDVPDSDIQTISWQEVVGRLMALRDANPATAGTVSTKHRKYIGSQSKQRMDAHDIANRLMRKENYLIALFNKEILDLTLPIPFLRNRQLFSRTLEWNLNLCILDYVFNEQGQLRPLFLKATHRRALSEGLRRRFIFAGVMNIFIAPFIVAYFLMHYFFRYFNEYQKNPSKIGSRQYTPLAEWKFREFNELWHLFERRIHMSYESANMYINQFPKDKTVQLSRFVAFIAGALLSVLALASVIDPELFLGFEITHDRTVLFYIGLFGTVYAVARGVVPDDAQVFDPEHALLDVTAYTHYKPAHWQGKLHSDDVRKEFATLYQLKVVIFLEEILSMIFTPFVLWFSLPKCSDRLIDFFREFTVHVDGLGYVCSFAVFDFKKGTNLMPPEPQHHRPRGLKHGLHDLRGDYFSAKDGKMLASYYGFLDHYAPPARPSGPHASQRQNYPQQPVPGPTHRAQPGANHLHSSRIDRWDNGQHSTMRQSALRTSRFGAITGVGGHASPMASMLLDPHHQPSMSGFRSKAHPTAASRYRPSRQAHPMADTIQDVDEDQLPGINIQPSNVTTTSSGGPATDDSQIEESWRINLAEDANSGEDDEAEDVEKVAGGGGVLGLIHQFQKVTNEGRGAVGM.

At 1 to 214 the chain is on the cytoplasmic side; sequence MTSQLITRLL…DVYIYFIGNG (214 aa). Residues 62–133 are disordered; sequence LAQASDTQST…PRPPSNRNRI (72 aa). The span at 65-77 shows a compositional bias: polar residues; that stretch reads ASDTQSTHSSFQS. The helical transmembrane segment at 215–235 threads the bilayer; sequence IWCIVLSRMLNILTLAFVVGF. The Lumenal segment spans residues 236-271; it reads TTFLTNCVDYRKVPHSKTLNQIIVPKCTNKMSASST. The helical transmembrane segment at 272–292 threads the bilayer; that stretch reads FFLWLFTVFWFGKVFQYIIDF. The Cytoplasmic portion of the chain corresponds to 293-438; it reads RRLRHMHDFY…RALSEGLRRR (146 aa). The stretch at 439–459 is an intramembrane region; the sequence is FIFAGVMNIFIAPFIVAYFLM. The Cytoplasmic segment spans residues 460–527; sequence HYFFRYFNEY…PKDKTVQLSR (68 aa). The chain crosses the membrane as a helical span at residues 528–548; sequence FVAFIAGALLSVLALASVIDP. The Lumenal portion of the chain corresponds to 549 to 560; that stretch reads ELFLGFEITHDR. Residues 561 to 581 form a helical membrane-spanning segment; that stretch reads TVLFYIGLFGTVYAVARGVVP. Over 582–627 the chain is Cytoplasmic; it reads DDAQVFDPEHALLDVTAYTHYKPAHWQGKLHSDDVRKEFATLYQLK. An intramembrane segment occupies 628 to 648; the sequence is VVIFLEEILSMIFTPFVLWFS. Topologically, residues 649 to 931 are cytoplasmic; the sequence is LPKCSDRLID…TNEGRGAVGM (283 aa). Disordered stretches follow at residues 734 to 780, 816 to 840, and 854 to 879; these read ARPS…GQHS, PSMS…RQAH, and LPGI…DSQI. Polar residues predominate over residues 740–749; sequence HASQRQNYPQ. Polar residues predominate over residues 859 to 871; it reads IQPSNVTTTSSGG.

This sequence belongs to the ATG9 family. As to quaternary structure, homotrimer; forms a homotrimer with a central pore that forms a path between the two membrane leaflets. Phosphorylated by ATG1. ATG1 phosphorylation is required for preautophagosome elongation.

It is found in the preautophagosomal structure membrane. Its subcellular location is the cytoplasmic vesicle membrane. The protein localises to the golgi apparatus membrane. It localises to the endoplasmic reticulum membrane. It catalyses the reaction a 1,2-diacyl-sn-glycero-3-phosphocholine(in) = a 1,2-diacyl-sn-glycero-3-phosphocholine(out). The enzyme catalyses a 1,2-diacyl-sn-glycero-3-phospho-L-serine(in) = a 1,2-diacyl-sn-glycero-3-phospho-L-serine(out). The catalysed reaction is a 1,2-diacyl-sn-glycero-3-phosphoethanolamine(in) = a 1,2-diacyl-sn-glycero-3-phosphoethanolamine(out). It carries out the reaction a 1,2-diacyl-sn-glycero-3-phospho-(1D-myo-inositol-3-phosphate)(in) = a 1,2-diacyl-sn-glycero-3-phospho-(1D-myo-inositol-3-phosphate)(out). In terms of biological role, phospholipid scramblase involved in autophagy and cytoplasm to vacuole transport (Cvt) vesicle formation. Cycles between the preautophagosomal structure/phagophore assembly site (PAS) and the cytoplasmic vesicle pool and supplies membrane for the growing autophagosome. Lipid scramblase activity plays a key role in preautophagosomal structure/phagophore assembly by distributing the phospholipids that arrive through ATG2 from the cytoplasmic to the luminal leaflet of the bilayer, thereby driving autophagosomal membrane expansion. Required for mitophagy. Also involved in endoplasmic reticulum-specific autophagic process and is essential for the survival of cells subjected to severe ER stress. Different machineries are required for anterograde trafficking to the PAS during either the Cvt pathway or bulk autophagy and for retrograde trafficking. This chain is Autophagy-related protein 9 (ATG9), found in Coccidioides immitis (strain RS) (Valley fever fungus).